The chain runs to 148 residues: Homoprotocatechuate degradative operon repressor (148 aa).

Residues 2–134 (HDSLTIALLQ…LTHLLEEFIA (133 aa)) enclose the HTH marR-type domain.

Functionally, repressor for the homoprotocatechuate catabolic pathway hpc operon. This is Homoprotocatechuate degradative operon repressor (hpcR) from Escherichia coli.